Consider the following 205-residue polypeptide: uncharacterized protein (205 aa).

A Nudix hydrolase domain is found at 51 to 189 (ANVDAVAILA…KKGFAIDVRL (139 aa)). A Nudix box motif is present at residues 90–111 (GLVDSKESCEDAAIRELREETG).

The protein belongs to the Nudix hydrolase family.

The protein localises to the cytoplasm. It localises to the nucleus. This is an uncharacterized protein from Schizosaccharomyces pombe (strain 972 / ATCC 24843) (Fission yeast).